The primary structure comprises 210 residues: Guanylate kinase (210 aa).

Residues 8 to 188 (GNLFIIAAPS…SLASLEHIVL (181 aa)) enclose the Guanylate kinase-like domain. 15–22 (APSGAGKS) provides a ligand contact to ATP.

This sequence belongs to the guanylate kinase family.

It is found in the cytoplasm. The enzyme catalyses GMP + ATP = GDP + ADP. Essential for recycling GMP and indirectly, cGMP. The polypeptide is Guanylate kinase (Idiomarina loihiensis (strain ATCC BAA-735 / DSM 15497 / L2-TR)).